The following is a 200-amino-acid chain: GGPAAYSTYTNTADFGAVGATLESTSKGLGGLNTITQFSKAVDSPTSSVRISNSRVSNDYGSLGYGALPAPAGLAYGAAGASYGASLHGAGAYGVVRAAPAIAAAPALAYGARAIAAPAIAAPALAYGARAIAAPALAYGRGLAYGGAYGAALAAPALAYGARAYAAPALALGARAYAAPAIAAAPALAYGARAYAAPAI.

10 tandem repeats follow at residues 98-101 (AAPA), 104-107 (AAPA), 116-119 (AAPA), 121-124 (AAPA), 133-136 (AAPA), 154-157 (AAPA), 166-169 (AAPA), 178-181 (AAPA), 184-187 (AAPA), and 196-199 (AAPA).

In terms of biological role, component of the cuticle of migratory locust which contains more than 100 different structural proteins. The protein is Cuticle protein 21.3 of Locusta migratoria (Migratory locust).